Here is a 1114-residue protein sequence, read N- to C-terminus: Kinesin-like protein KIN-12F (1114 aa).

The interval 1-84 (MADNRIAGSL…RSQVSASRPR (84 aa)) is disordered. Polar residues-rich tracts occupy residues 10-39 (LPTSSKWSFLPKSVSSHFKPSSNPRSSNPD) and 48-80 (PNIHNPRNQSVSSKSTAYKNQMDSPNCRSQVSA). A Kinesin motor domain is found at 104 to 436 (HVKVVVRIKP…LRFGERAKAM (333 aa)). Residue 175-182 (GQNGSGKT) coordinates ATP. Coiled coils occupy residues 761-791 (QQELEKLCSEQAAKIEQLTRLVGQHKLQTED), 872-942 (ARSF…LRRA), and 1038-1081 (EVLV…HKLE). The segment at 1092 to 1114 (NTLPESALQPLHQRNSAIEEEGM) is disordered.

This sequence belongs to the TRAFAC class myosin-kinesin ATPase superfamily. Kinesin family. KIN-12 subfamily.

This is Kinesin-like protein KIN-12F from Arabidopsis thaliana (Mouse-ear cress).